Reading from the N-terminus, the 157-residue chain is MRRAVCPGSFDPLHKGHVEVIARAANLFEEVVVAVSANPAKTYRFSVDERIAMIEATVSSLAGVAVRPMGPGLLAEFCRQIGADAIVKGLRGGADLEFEAPMAAMNRHLTGVETVYLPADARYTHVSSSLIKEVHGLGGDVAEFVPAAVLRGLDGGA.

Residue Ser-9 coordinates substrate. ATP is bound by residues 9 to 10 and His-17; that span reads SF. Substrate-binding residues include Lys-41, Leu-74, and Lys-88. ATP-binding positions include 89 to 91, Glu-99, and 123 to 129; these read GLR and YTHVSSS.

The protein belongs to the bacterial CoaD family. In terms of assembly, homohexamer. Mg(2+) is required as a cofactor.

The protein localises to the cytoplasm. It catalyses the reaction (R)-4'-phosphopantetheine + ATP + H(+) = 3'-dephospho-CoA + diphosphate. It functions in the pathway cofactor biosynthesis; coenzyme A biosynthesis; CoA from (R)-pantothenate: step 4/5. Reversibly transfers an adenylyl group from ATP to 4'-phosphopantetheine, yielding dephospho-CoA (dPCoA) and pyrophosphate. This is Phosphopantetheine adenylyltransferase from Micrococcus luteus (strain ATCC 4698 / DSM 20030 / JCM 1464 / CCM 169 / CCUG 5858 / IAM 1056 / NBRC 3333 / NCIMB 9278 / NCTC 2665 / VKM Ac-2230) (Micrococcus lysodeikticus).